The sequence spans 114 residues: Nucleoid-associated protein Cyan7425_0899 (114 aa).

It belongs to the YbaB/EbfC family. Homodimer.

It is found in the cytoplasm. Its subcellular location is the nucleoid. Binds to DNA and alters its conformation. May be involved in regulation of gene expression, nucleoid organization and DNA protection. The protein is Nucleoid-associated protein Cyan7425_0899 of Cyanothece sp. (strain PCC 7425 / ATCC 29141).